A 269-amino-acid chain; its full sequence is MSDLPGIVVTGASGRMGQMLMKTVLASGKARLVGAVERPGSDWVGRDAGAAMGGAAVGVTVTDDPLAAFAQAQAVIDFTAPEATVQFAELAAQARAVHVIGTTGLEPAHLERLAWAAHHAVIVRAGNMSLGVNLLTRLTQKVAEALDEDWDIEVVEAHHRMKVDAPSGTALMLGEAAARGRGVDLAQARVSGRDGITGPRAPGSIGFSAIRGGDIVGEHDVIFAAAGERITLRHVATDRAIFARGALKAALWGQDRRPGQYDMMDVLGL.

NAD(+)-binding positions include 11–16 (GASGRM) and E37. R38 serves as a coordination point for NADP(+). Residues 101 to 103 (GTT) and 125 to 128 (AGNM) contribute to the NAD(+) site. H158 functions as the Proton donor/acceptor in the catalytic mechanism. Residue H159 participates in (S)-2,3,4,5-tetrahydrodipicolinate binding. The active-site Proton donor is K162. (S)-2,3,4,5-tetrahydrodipicolinate is bound at residue 168 to 169 (GT).

Belongs to the DapB family.

It is found in the cytoplasm. It catalyses the reaction (S)-2,3,4,5-tetrahydrodipicolinate + NAD(+) + H2O = (2S,4S)-4-hydroxy-2,3,4,5-tetrahydrodipicolinate + NADH + H(+). The catalysed reaction is (S)-2,3,4,5-tetrahydrodipicolinate + NADP(+) + H2O = (2S,4S)-4-hydroxy-2,3,4,5-tetrahydrodipicolinate + NADPH + H(+). It participates in amino-acid biosynthesis; L-lysine biosynthesis via DAP pathway; (S)-tetrahydrodipicolinate from L-aspartate: step 4/4. In terms of biological role, catalyzes the conversion of 4-hydroxy-tetrahydrodipicolinate (HTPA) to tetrahydrodipicolinate. The protein is 4-hydroxy-tetrahydrodipicolinate reductase of Cereibacter sphaeroides (strain ATCC 17023 / DSM 158 / JCM 6121 / CCUG 31486 / LMG 2827 / NBRC 12203 / NCIMB 8253 / ATH 2.4.1.) (Rhodobacter sphaeroides).